A 175-amino-acid chain; its full sequence is uncharacterized protein (175 aa).

The tract at residues Ala113–Leu175 is disordered.

This is an uncharacterized protein from Bos taurus (Bovine).